A 260-amino-acid chain; its full sequence is tRNA (guanine-N(7)-)-methyltransferase (260 aa).

The disordered stretch occupies residues 1–37 (MIHDPNDAGLPDQLPTPSSEAENSPAGDTTPPEEALH). Positions 90, 115, 142, and 165 each coordinate S-adenosyl-L-methionine. Aspartate 165 is a catalytic residue. Substrate-binding positions include lysine 169, aspartate 201, and 236 to 239 (TKFE).

Belongs to the class I-like SAM-binding methyltransferase superfamily. TrmB family.

The catalysed reaction is guanosine(46) in tRNA + S-adenosyl-L-methionine = N(7)-methylguanosine(46) in tRNA + S-adenosyl-L-homocysteine. It functions in the pathway tRNA modification; N(7)-methylguanine-tRNA biosynthesis. Its function is as follows. Catalyzes the formation of N(7)-methylguanine at position 46 (m7G46) in tRNA. The polypeptide is tRNA (guanine-N(7)-)-methyltransferase (Paraburkholderia xenovorans (strain LB400)).